Reading from the N-terminus, the 532-residue chain is MSVLAGVEASGIARNYVFKNWAGIYSARPRLYFQPRSEDEVVAIVRAAREQGRTIVTVGSGHSPSDMCATDDWMVNLDRLNGVLELQEDEQGRYADVTVAAGIRVYELHRYLSARGYALQNLGSISEQSVGGIISTGTHGSSPYHGLVSSQYVNLTLVNGRGELVFLDSEHEPEVFRAAMLSLGKLGIIVRATIRVVPAFNIHSTQEVINFETLLDNWETIWTSSEFIRCWWYPYVRKCVLWRGVKTSEPAEKSRSSWWGTTLGRLVYESLLWLTVNVYPSLTPFVERFIFRQQYGKVETFGNGDEAVQTSIDGLNMDCLFSQFVDEWACPLNNGPEVLRSLDHSIAQAAQNKEFFVHVPIEVRCSNTTLPHEYKCPEDRTVTAPGPVYGNLLRPYLDNTPSHLRYAPLSDVTNSQLTLYINATIYRPFGTNTPIHKWFTLFEDTLGAAGGKPHWAKNFLGSTATAAGPVKSSDEYQDYEMRGMATKIKEWYGDNLKQFQKVRREQDPHNVFIANKDWAVKNGIIDIDELDS.

The FAD-binding PCMH-type domain occupies 25–199 (YSARPRLYFQ…VRATIRVVPA (175 aa)). His-62 is subject to Pros-8alpha-FAD histidine.

It belongs to the oxygen-dependent FAD-linked oxidoreductase family. The cofactor is FAD.

It localises to the mitochondrion membrane. The catalysed reaction is D-arabinono-1,4-lactone + O2 = dehydro-D-arabinono-1,4-lactone + H2O2 + H(+). The protein operates within cofactor biosynthesis; D-erythroascorbate biosynthesis; dehydro-D-arabinono-1,4-lactone from D-arabinose: step 2/2. This Eremothecium gossypii (strain ATCC 10895 / CBS 109.51 / FGSC 9923 / NRRL Y-1056) (Yeast) protein is D-arabinono-1,4-lactone oxidase (ALO1).